Consider the following 339-residue polypeptide: Glyceraldehyde-3-phosphate dehydrogenase (339 aa).

NAD(+) is bound by residues 12 to 13 (RI), Asp35, and Lys84. D-glyceraldehyde 3-phosphate contacts are provided by residues 155–157 (SCT), Thr186, 215–216 (TG), and Arg238. Cys156 serves as the catalytic Nucleophile. Asn320 contacts NAD(+).

Belongs to the glyceraldehyde-3-phosphate dehydrogenase family. Homotetramer.

Its subcellular location is the cytoplasm. It carries out the reaction D-glyceraldehyde 3-phosphate + phosphate + NAD(+) = (2R)-3-phospho-glyceroyl phosphate + NADH + H(+). The protein operates within carbohydrate degradation; glycolysis; pyruvate from D-glyceraldehyde 3-phosphate: step 1/5. This chain is Glyceraldehyde-3-phosphate dehydrogenase (GAPD), found in Mastigamoeba balamuthi (Phreatamoeba balamuthi).